The chain runs to 498 residues: Protein DETOXIFICATION 30 (498 aa).

A run of 12 helical transmembrane segments spans residues 64–86 (YSLG…AAVS), 91–111 (VIAG…ETLC), 136–156 (VTAV…AFIG), 161–181 (ISSA…AYAV), 197–217 (VMAA…WFVI), 227–247 (LAVV…VYIF), 277–297 (AVML…AGYL), 302–322 (ISVA…MIAI), 349–369 (LVAV…LLIF), 393–413 (ILAV…VAVG), 419–439 (VVAY…GLLL), and 447–467 (VMGI…VLTW).

Belongs to the multi antimicrobial extrusion (MATE) (TC 2.A.66.1) family.

It is found in the membrane. The sequence is that of Protein DETOXIFICATION 30 from Arabidopsis thaliana (Mouse-ear cress).